The following is a 210-amino-acid chain: MELQLAIDLLNKEEATILANKVKDYINIVEIGTPIVINEGLPAVQHLNDNIDGVKVLADLKIMDAADYEVSQAVKFGADIVTILGVAEDASIKAAVDEAHKHGKQLLVDMIAVQDLEKRAKDLDDLGADYIAVHTGYDLQAEGQSPLESLRKVKSVISNSKVAVAGGIKPDTIKDIVAENPDLIIVGGGIANADDPVEAAKQCRAAIEGK.

The protein belongs to the HPS/KGPDC family. HPS subfamily.

The enzyme catalyses D-ribulose 5-phosphate + formaldehyde = D-arabino-hex-3-ulose 6-phosphate. It functions in the pathway one-carbon metabolism; formaldehyde assimilation via RuMP pathway; D-fructose 6-phosphate from D-ribulose 5-phosphate and formaldehyde: step 1/2. In terms of biological role, catalyzes the condensation of ribulose 5-phosphate with formaldehyde to form 3-hexulose 6-phosphate. The polypeptide is 3-hexulose-6-phosphate synthase 1 (Staphylococcus saprophyticus subsp. saprophyticus (strain ATCC 15305 / DSM 20229 / NCIMB 8711 / NCTC 7292 / S-41)).